Here is a 63-residue protein sequence, read N- to C-terminus: MNFSRILFFVFACFVALASVSAAPEPRWKVFKKIEKVGRNIRDGVIKAGPAIAVVGQAKALGK.

Positions 1–22 (MNFSRILFFVFACFVALASVSA) are cleaved as a signal peptide. A propeptide spans 23–26 (APEP) (removed by a dipeptidylpeptidase). Leucine amide is present on Leu61.

It belongs to the cecropin family.

The protein resides in the secreted. Its function is as follows. Has antibacterial activity. This chain is Hyphancin-3F, found in Hyphantria cunea (Fall webworm moth).